Here is a 154-residue protein sequence, read N- to C-terminus: Ribosomal RNA large subunit methyltransferase H (154 aa).

S-adenosyl-L-methionine is bound by residues Leu70, Gly102, and 121 to 126 (LSRMTL).

The protein belongs to the RNA methyltransferase RlmH family. In terms of assembly, homodimer.

The protein resides in the cytoplasm. The catalysed reaction is pseudouridine(1915) in 23S rRNA + S-adenosyl-L-methionine = N(3)-methylpseudouridine(1915) in 23S rRNA + S-adenosyl-L-homocysteine + H(+). Functionally, specifically methylates the pseudouridine at position 1915 (m3Psi1915) in 23S rRNA. The chain is Ribosomal RNA large subunit methyltransferase H from Geobacter sp. (strain M21).